Consider the following 386-residue polypeptide: ADP,ATP carrier protein 1, mitochondrial (386 aa).

The N-terminal 76 residues, 1 to 76 (MDQVQHPSVM…PSTASAICVQ (76 aa)), are a transit peptide targeting the mitochondrion. Solcar repeat units lie at residues 84–177 (SSFA…FKRL), 189–281 (KWFA…LKPV), and 289–375 (DSFF…LQLI). The next 5 membrane-spanning stretches (helical) occupy residues 86 to 113 (FAID…VKLL), 154 to 178 (TANV…KRLF), 187 to 207 (YWKW…SSLL), 257 to 278 (FNIS…YDSL), and 292 to 312 (FASF…SYPI). ADP-binding residues include Arg159 and Lys171. Arg316 is a binding site for ADP. The important for transport activity stretch occupies residues 316–321 (RRRMMM). The short motif at 316–321 (RRRMMM) is the Nucleotide carrier signature motif element. The helical transmembrane segment at 352–372 (AGSNILRAIAGAGVLAGYDKL) threads the bilayer.

This sequence belongs to the mitochondrial carrier (TC 2.A.29) family. Monomer.

The protein resides in the mitochondrion inner membrane. The catalysed reaction is ADP(in) + ATP(out) = ADP(out) + ATP(in). With respect to regulation, the matrix-open state (m-state) is inhibited by the membrane-permeable bongkrekic acid (BKA). The cytoplasmic-open state (c-state) is inhibited by the membrane-impermeable toxic inhibitor carboxyatractyloside (CATR). Its function is as follows. ADP:ATP antiporter that mediates import of ADP into the mitochondrial matrix for ATP synthesis, and export of ATP out to fuel the cell. Cycles between the cytoplasmic-open state (c-state) and the matrix-open state (m-state): operates by the alternating access mechanism with a single substrate-binding site intermittently exposed to either the cytosolic (c-state) or matrix (m-state) side of the inner mitochondrial membrane. The protein is ADP,ATP carrier protein 1, mitochondrial (ANT1) of Gossypium hirsutum (Upland cotton).